Reading from the N-terminus, the 389-residue chain is Maintenance of mitochondrial morphology protein 1-1 (389 aa).

Residues 1–22 lie on the Lumenal side of the membrane; the sequence is MSQFVLPAVASEGIINWPFLTG. The chain crosses the membrane as a helical span at residues 23-43; that stretch reads FMLGQFSVGLVLLIFVRFFIF. Topologically, residues 44-389 are cytoplasmic; that stretch reads SDQTEPDINT…YRSLQTSPRR (346 aa). Residues 83-278 enclose the SMP-LTD domain; it reads QPESLDWFSV…YPEYQQFELP (196 aa). Disordered regions lie at residues 283 to 345 and 360 to 389; these read KTSA…PKFI and FYEM…SPRR. Residues 330–341 show a composition bias toward polar residues; the sequence is MSMSSQRPNINN.

The protein belongs to the MMM1 family. Homodimer. Component of the ER-mitochondria encounter structure (ERMES) or MDM complex, composed of MMM1, MDM10, MDM12 and MDM34. An MMM1 homodimer associates with one molecule of MDM12 on each side in a pairwise head-to-tail manner, and the SMP-LTD domains of MMM1 and MDM12 generate a continuous hydrophobic tunnel for phospholipid trafficking.

It localises to the endoplasmic reticulum membrane. Functionally, component of the ERMES/MDM complex, which serves as a molecular tether to connect the endoplasmic reticulum (ER) and mitochondria. Components of this complex are involved in the control of mitochondrial shape and protein biogenesis, and function in nonvesicular lipid trafficking between the ER and mitochondria. The MDM12-MMM11 subcomplex functions in the major beta-barrel assembly pathway that is responsible for biogenesis of all outer membrane beta-barrel proteins, and acts in a late step after the SAM complex. The MDM10-MDM12-MMM1 subcomplex further acts in the TOM40-specific pathway after the action of the MDM12-MMM1 complex. Essential for establishing and maintaining the structure of mitochondria and maintenance of mtDNA nucleoids. The protein is Maintenance of mitochondrial morphology protein 1-1 of Yarrowia lipolytica (strain CLIB 122 / E 150) (Yeast).